Consider the following 621-residue polypeptide: Interferon-induced GTP-binding protein Mx1 (621 aa).

Positions D31–P304 constitute a Dynamin-type G domain. The G1 motif stretch occupies residues G41–S48. G41–S48 serves as a coordination point for GTP. Residues V66–R68 are G2 motif. Residues D142–G145 form a G3 motif region. GTP contacts are provided by residues D142–I146 and T211–D214. A G4 motif region spans residues T211–D214. Positions K243–G246 are G5 motif. In terms of domain architecture, GED spans L535–F621.

This sequence belongs to the TRAFAC class dynamin-like GTPase superfamily. Dynamin/Fzo/YdjA family.

Its subcellular location is the cytoplasm. Functionally, does not inhibit strain RB-1 of the fish pathogen, infectious hematopoietic necrosis virus (IHNV). The sequence is that of Interferon-induced GTP-binding protein Mx1 (mx1) from Oncorhynchus mykiss (Rainbow trout).